The chain runs to 319 residues: Lipase 1 (319 aa).

S189 (nucleophile) is an active-site residue. Ca(2+)-binding residues include D314 and D317.

The enzyme catalyses a triacylglycerol + H2O = a diacylglycerol + a fatty acid + H(+). This is Lipase 1 (lip1) from Moraxella sp. (strain TA144).